Consider the following 257-residue polypeptide: Imidazole glycerol phosphate synthase subunit HisF (257 aa).

Catalysis depends on residues D12 and D131.

Belongs to the HisA/HisF family. As to quaternary structure, heterodimer of HisH and HisF.

The protein localises to the cytoplasm. It carries out the reaction 5-[(5-phospho-1-deoxy-D-ribulos-1-ylimino)methylamino]-1-(5-phospho-beta-D-ribosyl)imidazole-4-carboxamide + L-glutamine = D-erythro-1-(imidazol-4-yl)glycerol 3-phosphate + 5-amino-1-(5-phospho-beta-D-ribosyl)imidazole-4-carboxamide + L-glutamate + H(+). It participates in amino-acid biosynthesis; L-histidine biosynthesis; L-histidine from 5-phospho-alpha-D-ribose 1-diphosphate: step 5/9. Functionally, IGPS catalyzes the conversion of PRFAR and glutamine to IGP, AICAR and glutamate. The HisF subunit catalyzes the cyclization activity that produces IGP and AICAR from PRFAR using the ammonia provided by the HisH subunit. The protein is Imidazole glycerol phosphate synthase subunit HisF of Burkholderia ambifaria (strain MC40-6).